A 515-amino-acid polypeptide reads, in one-letter code: Bifunctional purine biosynthesis protein PurH (515 aa).

An MGS-like domain is found at 1–145 (MTKRALISVS…KNHASVTVVV (145 aa)).

It belongs to the PurH family.

It catalyses the reaction (6R)-10-formyltetrahydrofolate + 5-amino-1-(5-phospho-beta-D-ribosyl)imidazole-4-carboxamide = 5-formamido-1-(5-phospho-D-ribosyl)imidazole-4-carboxamide + (6S)-5,6,7,8-tetrahydrofolate. The catalysed reaction is IMP + H2O = 5-formamido-1-(5-phospho-D-ribosyl)imidazole-4-carboxamide. It functions in the pathway purine metabolism; IMP biosynthesis via de novo pathway; 5-formamido-1-(5-phospho-D-ribosyl)imidazole-4-carboxamide from 5-amino-1-(5-phospho-D-ribosyl)imidazole-4-carboxamide (10-formyl THF route): step 1/1. Its pathway is purine metabolism; IMP biosynthesis via de novo pathway; IMP from 5-formamido-1-(5-phospho-D-ribosyl)imidazole-4-carboxamide: step 1/1. In Streptococcus agalactiae serotype III (strain NEM316), this protein is Bifunctional purine biosynthesis protein PurH.